Reading from the N-terminus, the 240-residue chain is Uridylate kinase (240 aa).

Residue 12-15 participates in ATP binding; the sequence is KLSG. The interval 20 to 25 is involved in allosteric activation by GTP; it reads GEQGFG. G54 serves as a coordination point for UMP. ATP-binding residues include G55 and R59. UMP-binding positions include D74 and 135 to 142; that span reads TGNPYFST. The ATP site is built by N163, Y169, and D172.

It belongs to the UMP kinase family. As to quaternary structure, homohexamer.

It localises to the cytoplasm. It catalyses the reaction UMP + ATP = UDP + ADP. It participates in pyrimidine metabolism; CTP biosynthesis via de novo pathway; UDP from UMP (UMPK route): step 1/1. Allosterically activated by GTP. Inhibited by UTP. Catalyzes the reversible phosphorylation of UMP to UDP. This Bacillus cereus (strain ATCC 14579 / DSM 31 / CCUG 7414 / JCM 2152 / NBRC 15305 / NCIMB 9373 / NCTC 2599 / NRRL B-3711) protein is Uridylate kinase.